Here is a 403-residue protein sequence, read N- to C-terminus: Subtilisin-like protease CPC735_035780 (403 aa).

The signal sequence occupies residues 1 to 19 (MSIMKIATLFFAALSAVEA). The propeptide occupies 20–117 (AKLLTPSDKR…VEPDRRVHLT (98 aa)). In terms of domain architecture, Inhibitor I9 spans 35–116 (SYIVVMKDNV…YVEPDRRVHL (82 aa)). The 277-residue stretch at 127 to 403 (SWGLGRISHR…NKLLYNNSGR (277 aa)) folds into the Peptidase S8 domain. Catalysis depends on charge relay system residues D159 and H190. N-linked (GlcNAc...) asparagine glycans are attached at residues N233 and N251. S349 serves as the catalytic Charge relay system. N399 is a glycosylation site (N-linked (GlcNAc...) asparagine).

It belongs to the peptidase S8 family.

It is found in the secreted. Its function is as follows. Secreted subtilisin-like serine protease with keratinolytic activity that contributes to pathogenicity. The polypeptide is Subtilisin-like protease CPC735_035780 (Coccidioides posadasii (strain C735) (Valley fever fungus)).